Reading from the N-terminus, the 155-residue chain is Deoxyuridine 5'-triphosphate nucleotidohydrolase (155 aa).

Substrate-binding positions include 74 to 76, N87, and 91 to 93; these read RSG and TID.

Belongs to the dUTPase family. Requires Mg(2+) as cofactor.

The catalysed reaction is dUTP + H2O = dUMP + diphosphate + H(+). It functions in the pathway pyrimidine metabolism; dUMP biosynthesis; dUMP from dCTP (dUTP route): step 2/2. Functionally, this enzyme is involved in nucleotide metabolism: it produces dUMP, the immediate precursor of thymidine nucleotides and it decreases the intracellular concentration of dUTP so that uracil cannot be incorporated into DNA. The chain is Deoxyuridine 5'-triphosphate nucleotidohydrolase from Cereibacter sphaeroides (strain KD131 / KCTC 12085) (Rhodobacter sphaeroides).